Reading from the N-terminus, the 482-residue chain is Catalase (482 aa).

Residues 1 to 11 (MNAMTNKTLTT) show a composition bias toward polar residues. Residues 1-21 (MNAMTNKTLTTAAGAPVADNN) form a disordered region. Active-site residues include H57 and N130. Y340 provides a ligand contact to heme.

This sequence belongs to the catalase family. As to quaternary structure, homodimer. Heme serves as cofactor.

The catalysed reaction is 2 H2O2 = O2 + 2 H2O. In terms of biological role, decomposes hydrogen peroxide into water and oxygen; serves to protect cells from the toxic effects of hydrogen peroxide. This chain is Catalase (katA), found in Bordetella bronchiseptica (strain ATCC BAA-588 / NCTC 13252 / RB50) (Alcaligenes bronchisepticus).